A 275-amino-acid polypeptide reads, in one-letter code: Putative ankyrin repeat protein L715 (275 aa).

ANK repeat units follow at residues 94-123 (NINYGLCQAIENYHLKIVELLIDHGADINY), 124-153 (NNGLPLNLAVKNGYYDIIELLIEKKVNTND), 155-183 (IFQLLTHCCQNNLPNSLRILLKENISIDP), and 184-213 (IYSTMVNLCLDNGYAECASILINHNNSDST). The disordered stretch occupies residues 253–275 (NQDESDVGDDAENDIENDIEDDN). Over residues 255–275 (DESDVGDDAENDIENDIEDDN) the composition is skewed to acidic residues.

The sequence is that of Putative ankyrin repeat protein L715 from Acanthamoeba polyphaga mimivirus (APMV).